The sequence spans 168 residues: Large ribosomal subunit protein uL10 (168 aa).

Belongs to the universal ribosomal protein uL10 family. As to quaternary structure, part of the ribosomal stalk of the 50S ribosomal subunit. The N-terminus interacts with L11 and the large rRNA to form the base of the stalk. The C-terminus forms an elongated spine to which L12 dimers bind in a sequential fashion forming a multimeric L10(L12)X complex.

Functionally, forms part of the ribosomal stalk, playing a central role in the interaction of the ribosome with GTP-bound translation factors. This chain is Large ribosomal subunit protein uL10, found in Ralstonia nicotianae (strain ATCC BAA-1114 / GMI1000) (Ralstonia solanacearum).